Here is a 477-residue protein sequence, read N- to C-terminus: MPGSDTALTVDRTYSYPGRHHRCKSRVERHDMNTLSLPLNIRRGGSDTNLNFDVPDGILDFHKVKLTADSLKQKILKVTEQIKIEQTSRDGNVAEYLKLVNNADKQQAGRIKQVFEKKNQKSAHSIAQLQKKLEQYHRKLREIEQNGASRSSKDISKDHLKDIHRSLKDAHVKSRTAPHCMESSKSGMPGVSLTPPVFVFNKSREFANLIRNKFGSADNIAHLKNSLEEFRPEASARAYGGSATIVNKPKYGSDDECSSGTSGSADSNGNQSFGAGGASTLDSQGKLAVILEELREIKDTQAQLAEDIEALKVQFKREYGFISQTLQEERYRYERLEDQLHDLTDLHQHETANLKQELASIEEKVAYQAYERSRDIQEALESCQTRISKLELHQQEQQALQTDTVNAKVLLGRCINVILAFMTVILVCVSTIAKFVSPMMKSRCHILGTFFAVTLLAIFCKNWDHILCAIERMIIPR.

Ser46 is modified (phosphoserine). Positions 112 to 153 (KQVFEKKNQKSAHSIAQLQKKLEQYHRKLREIEQNGASRSSK) form a coiled coil. 2 disordered regions span residues 168–188 (KDAHVKSRTAPHCMESSKSGM) and 249–277 (PKYGSDDECSSGTSGSADSNGNQSFGAGG). Residue Ser253 is modified to Phosphoserine. The segment covering 258 to 273 (SSGTSGSADSNGNQSF) has biased composition (polar residues). A coiled-coil region spans residues 282 to 398 (DSQGKLAVIL…KLELHQQEQQ (117 aa)). The next 2 helical transmembrane spans lie at 417–437 (VILAFMTVILVCVSTIAKFVS) and 450–470 (FFAVTLLAIFCKNWDHILCAI).

Belongs to the TEX28 family. As to quaternary structure, may form homodimers and heterodimers with TMCC2 or TMCC3 via the coiled-coil domains. Interacts with ribosomal proteins RPL4 and RPS6. In terms of tissue distribution, widely expressed, with highest levels in brain, spinal cord and testis.

Its subcellular location is the endoplasmic reticulum membrane. This chain is Transmembrane and coiled-coil domain protein 3, found in Homo sapiens (Human).